A 415-amino-acid chain; its full sequence is tRNA(Ile2) 2-agmatinylcytidine synthetase TiaS (415 aa).

It belongs to the TiaS family.

It localises to the cytoplasm. The catalysed reaction is cytidine(34) in tRNA(Ile2) + agmatine + ATP + H2O = 2-agmatinylcytidine(34) in tRNA(Ile2) + AMP + 2 phosphate + 2 H(+). Its function is as follows. ATP-dependent agmatine transferase that catalyzes the formation of 2-agmatinylcytidine (agm2C) at the wobble position (C34) of tRNA(Ile2), converting the codon specificity from AUG to AUA. This is tRNA(Ile2) 2-agmatinylcytidine synthetase TiaS from Methanocorpusculum labreanum (strain ATCC 43576 / DSM 4855 / Z).